We begin with the raw amino-acid sequence, 176 residues long: Deoxyuridine 5'-triphosphate nucleotidohydrolase (176 aa).

Substrate-binding positions include 67 to 69 (RSG), asparagine 80, 84 to 86 (TVD), and lysine 94. The interval 141 to 176 (GGFGSTGGHASVDGAEGGITHGGNSYASVVSDREGQ) is disordered.

Belongs to the dUTPase family. It depends on Mg(2+) as a cofactor.

The catalysed reaction is dUTP + H2O = dUMP + diphosphate + H(+). It participates in pyrimidine metabolism; dUMP biosynthesis; dUMP from dCTP (dUTP route): step 2/2. In terms of biological role, this enzyme is involved in nucleotide metabolism: it produces dUMP, the immediate precursor of thymidine nucleotides and it decreases the intracellular concentration of dUTP so that uracil cannot be incorporated into DNA. This chain is Deoxyuridine 5'-triphosphate nucleotidohydrolase, found in Streptomyces griseus subsp. griseus (strain JCM 4626 / CBS 651.72 / NBRC 13350 / KCC S-0626 / ISP 5235).